A 625-amino-acid polypeptide reads, in one-letter code: Archaeosine synthase subunit alpha (625 aa).

In terms of domain architecture, PUA spans 556 to 624; that stretch reads KYVVKIDDFV…VAVDVRHVKK (69 aa).

The protein belongs to the archaeosine synthase type 1 family. Forms a robust complex with the archaeosine synthase beta subunit RaSEA. Formation of this complex highly increases lysine transfer activity. The complex likely consists of an alpha(2)beta(2) heterotetrameric structure.

The enzyme catalyses 7-cyano-7-carbaguanosine(15) in tRNA + L-lysine = 7-N-[(5S)-5-amino-5-carboxypentyl]formamidino-7-deazaguanosine(15) in tRNA. It functions in the pathway tRNA modification; archaeosine-tRNA biosynthesis. Functionally, functions in the biosynthesis of archaeosine, a modified nucleoside present in the dihydrouridine loop (D-loop) of archaeal tRNAs. Catalyzes the addition of L-lysine to the cyano group of 7-cyano-7-deazaguanine (preQ0)-modified tRNAs at position 15, to generate q0kN15-tRNA, a q0N lysine adduct identified as 7-N-[(5S)-5-amino-5-carboxypentyl]formamidino-7-deazaguanosine. This is Archaeosine synthase subunit alpha from Methanosarcina acetivorans (strain ATCC 35395 / DSM 2834 / JCM 12185 / C2A).